Consider the following 419-residue polypeptide: Zinc metalloproteinase-disintegrin-like atrolysin-A (419 aa).

In terms of domain architecture, Peptidase M12B spans 6 to 202 (RYVELVIVAD…YNPQCILNEP (197 aa)). Glutamate 9 contributes to the Ca(2+) binding site. Asparagine 72 carries an N-linked (GlcNAc...) asparagine glycan. Ca(2+) is bound at residue aspartate 93. Disulfide bonds link cysteine 117–cysteine 197, cysteine 157–cysteine 181, and cysteine 159–cysteine 164. Histidine 142 lines the Zn(2+) pocket. Glutamate 143 is a catalytic residue. Positions 146 and 152 each coordinate Zn(2+). Ca(2+)-binding residues include cysteine 197, asparagine 200, valine 212, asparagine 215, leucine 217, glutamate 219, glutamate 222, and aspartate 225. Positions 210-296 (PPVCGNELLE…DCPTDDFHRN (87 aa)) constitute a Disintegrin domain. 14 disulfides stabilise this stretch: cysteine 213–cysteine 242, cysteine 224–cysteine 237, cysteine 226–cysteine 232, cysteine 236–cysteine 259, cysteine 250–cysteine 256, cysteine 255–cysteine 281, cysteine 268–cysteine 288, cysteine 275–cysteine 307, cysteine 300–cysteine 312, cysteine 319–cysteine 369, cysteine 334–cysteine 376, cysteine 347–cysteine 357, cysteine 364–cysteine 398, and cysteine 392–cysteine 403. The D/ECD-tripeptide signature appears at 274 to 276 (ECD). 3 N-linked (GlcNAc...) asparagine glycosylation sites follow: asparagine 326, asparagine 338, and asparagine 342.

The protein belongs to the venom metalloproteinase (M12B) family. P-III subfamily. P-IIIa sub-subfamily. As to quaternary structure, monomer. Requires Zn(2+) as cofactor. As to expression, expressed by the venom gland.

The protein localises to the secreted. It carries out the reaction Cleavage of 3-Asn-|-Gln-4, 5-His-|-Leu-6, 10-His-|-Leu-11, 14-Ala-|-Leu-15 and 16-Tyr-|-Leu-17 in insulin B chain. Removes C-terminal Leu from small peptides.. Its function is as follows. Snake venom zinc metalloproteinase-disintegrin that causes hemorrhage by provoking the degradation of the sub-endothelial matrix proteins (fibronectin, laminin, type IV collagen, nidogen, and gelatins) and disturbances in platelet function. The recombinant cysteine-rich domain interacts with the alpha-2/beta-1 integrin (ITGA2/ITGB1) (collagen receptor), and inhibits the platelet aggregation induced by collagen. The protein is Zinc metalloproteinase-disintegrin-like atrolysin-A of Crotalus atrox (Western diamondback rattlesnake).